Here is a 307-residue protein sequence, read N- to C-terminus: Retron Ec86 putative ribosyltransferase/DNA-binding protein (307 aa).

In terms of biological role, possible ribosyltransferase/DNA-binding component of antiviral defense system retron Ec86, composed of a non-coding RNA (ncRNA), a ribosyltransferase/DNA-binding protein and a reverse transcriptase (RT). Expression of the 3-gene retron confers protection against bacteriophages T5. At multiplicity of infection (MOI) of 0.02 cultures grow normally when infected with T5 without collapsing, at MOI 2 cultures enter growth stasis. In Escherichia coli, this protein is Retron Ec86 putative ribosyltransferase/DNA-binding protein.